The following is a 448-amino-acid chain: Pentatricopeptide repeat-containing protein At1g80550, mitochondrial (448 aa).

The N-terminal 21 residues, Met-1–Leu-21, are a transit peptide targeting the mitochondrion. PPR repeat units lie at residues Thr-80–Asn-110, Asn-116–Phe-146, Asp-150–Val-186, Asn-188–Lys-222, Asp-223–Leu-257, Asp-258–Pro-292, Asn-293–Pro-327, Thr-331–Pro-359, Lys-360–Pro-394, and Asp-395–Pro-429.

This sequence belongs to the PPR family. P subfamily.

It localises to the mitochondrion. The protein is Pentatricopeptide repeat-containing protein At1g80550, mitochondrial of Arabidopsis thaliana (Mouse-ear cress).